The primary structure comprises 170 residues: Shikimate kinase (170 aa).

ATP is bound at residue 15–20 (GTGKTT). T19 serves as a coordination point for Mg(2+). 3 residues coordinate substrate: D37, R61, and G82. ATP is bound at residue R120. R138 serves as a coordination point for substrate. Position 154 (Q154) interacts with ATP.

It belongs to the shikimate kinase family. As to quaternary structure, monomer. Mg(2+) is required as a cofactor.

It is found in the cytoplasm. It catalyses the reaction shikimate + ATP = 3-phosphoshikimate + ADP + H(+). It functions in the pathway metabolic intermediate biosynthesis; chorismate biosynthesis; chorismate from D-erythrose 4-phosphate and phosphoenolpyruvate: step 5/7. Functionally, catalyzes the specific phosphorylation of the 3-hydroxyl group of shikimic acid using ATP as a cosubstrate. The polypeptide is Shikimate kinase (Staphylococcus epidermidis (strain ATCC 35984 / DSM 28319 / BCRC 17069 / CCUG 31568 / BM 3577 / RP62A)).